The primary structure comprises 508 residues: Glutamate--cysteine ligase, chloroplastic (508 aa).

The N-terminal 59 residues, 1–59 (MTTIFRLASSSSPSLRHDATPHNFHIRKTSISNTFSFSSKNSLSFKRILTSGGSRRFIV), are a transit peptide targeting the chloroplast. 2 disulfide bridges follow: Cys172–Cys392 and Cys335–Cys350.

This sequence belongs to the carboxylate-amine ligase family. Glutamate--cysteine ligase type 2 subfamily. In terms of assembly, homodimer or monomer when oxidized or reduced, respectively. Post-translationally, the Cys-172-Cys-392 disulfide bridge is known to modulate the enzyme activity according to the redox status. The oxidized form constitutes the active enzyme.

The protein localises to the plastid. The protein resides in the chloroplast. The enzyme catalyses L-cysteine + L-glutamate + ATP = gamma-L-glutamyl-L-cysteine + ADP + phosphate + H(+). The protein operates within sulfur metabolism; glutathione biosynthesis; glutathione from L-cysteine and L-glutamate: step 1/2. The protein is Glutamate--cysteine ligase, chloroplastic (GSH1) of Medicago truncatula (Barrel medic).